Consider the following 119-residue polypeptide: Large ribosomal subunit protein uL22 (119 aa).

It belongs to the universal ribosomal protein uL22 family. Part of the 50S ribosomal subunit.

This protein binds specifically to 23S rRNA; its binding is stimulated by other ribosomal proteins, e.g. L4, L17, and L20. It is important during the early stages of 50S assembly. It makes multiple contacts with different domains of the 23S rRNA in the assembled 50S subunit and ribosome. Its function is as follows. The globular domain of the protein is located near the polypeptide exit tunnel on the outside of the subunit, while an extended beta-hairpin is found that lines the wall of the exit tunnel in the center of the 70S ribosome. This Bifidobacterium adolescentis (strain ATCC 15703 / DSM 20083 / NCTC 11814 / E194a) protein is Large ribosomal subunit protein uL22.